The sequence spans 413 residues: Imidazolonepropionase (413 aa).

2 residues coordinate Fe(3+): His70 and His72. The Zn(2+) site is built by His70 and His72. 4-imidazolone-5-propanoate-binding residues include Arg79, Tyr142, and His175. Tyr142 lines the N-formimidoyl-L-glutamate pocket. His240 contributes to the Fe(3+) binding site. His240 is a Zn(2+) binding site. Position 243 (Glu243) interacts with 4-imidazolone-5-propanoate. Residue Asp315 participates in Fe(3+) binding. Asp315 is a binding site for Zn(2+). Positions 317 and 319 each coordinate N-formimidoyl-L-glutamate. Ser320 lines the 4-imidazolone-5-propanoate pocket.

Belongs to the metallo-dependent hydrolases superfamily. HutI family. It depends on Zn(2+) as a cofactor. Fe(3+) is required as a cofactor.

The protein localises to the cytoplasm. The enzyme catalyses 4-imidazolone-5-propanoate + H2O = N-formimidoyl-L-glutamate. It functions in the pathway amino-acid degradation; L-histidine degradation into L-glutamate; N-formimidoyl-L-glutamate from L-histidine: step 3/3. Functionally, catalyzes the hydrolytic cleavage of the carbon-nitrogen bond in imidazolone-5-propanoate to yield N-formimidoyl-L-glutamate. It is the third step in the universal histidine degradation pathway. In Treponema denticola (strain ATCC 35405 / DSM 14222 / CIP 103919 / JCM 8153 / KCTC 15104), this protein is Imidazolonepropionase.